Here is a 132-residue protein sequence, read N- to C-terminus: Small ribosomal subunit protein uS19 (132 aa).

This sequence belongs to the universal ribosomal protein uS19 family.

Functionally, protein S19 forms a complex with S13 that binds strongly to the 16S ribosomal RNA. This Pyrococcus abyssi (strain GE5 / Orsay) protein is Small ribosomal subunit protein uS19 (rps19).